A 190-amino-acid polypeptide reads, in one-letter code: Peptide deformylase (190 aa).

Positions 94 and 136 each coordinate Fe cation. Glutamate 137 is an active-site residue. Fe cation is bound at residue histidine 140.

This sequence belongs to the polypeptide deformylase family. Requires Fe(2+) as cofactor.

The catalysed reaction is N-terminal N-formyl-L-methionyl-[peptide] + H2O = N-terminal L-methionyl-[peptide] + formate. Removes the formyl group from the N-terminal Met of newly synthesized proteins. Requires at least a dipeptide for an efficient rate of reaction. N-terminal L-methionine is a prerequisite for activity but the enzyme has broad specificity at other positions. The sequence is that of Peptide deformylase from Chlorobium luteolum (strain DSM 273 / BCRC 81028 / 2530) (Pelodictyon luteolum).